We begin with the raw amino-acid sequence, 601 residues long: Oligoendopeptidase F homolog (601 aa).

His387 lines the Zn(2+) pocket. Glu388 is an active-site residue. Residues His391 and His394 each contribute to the Zn(2+) site.

It belongs to the peptidase M3 family. The cofactor is Zn(2+).

Hydrolyzes peptides containing between 7 and 17 amino acids with a rather wide specificity. The polypeptide is Oligoendopeptidase F homolog (pepF) (Lactococcus lactis subsp. lactis (strain IL1403) (Streptococcus lactis)).